Here is a 192-residue protein sequence, read N- to C-terminus: MSEKSIVQEARDIQLAMELITLGARLQMLESETQLSRGRLIKLYKELRGSPPPKGMLPFSTDWFMTWEQNVHASMFCNAWQFLLKTGLCNGVDAVIKAYRLYLEQCPQAEEGPLLALTRAWTLVRFVESGLLQLSSCNCCGGNFITHAHQPVGSFACSLCQPPSRAVKRRKLSQNPADIIPQLLDEQRVQAV.

The Zn(2+) site is built by Cys-137, Cys-140, Cys-157, and Cys-160.

The protein belongs to the FlhC family. Heterohexamer composed of two FlhC and four FlhD subunits. Each FlhC binds a FlhD dimer, forming a heterotrimer, and a hexamer assembles by dimerization of two heterotrimers. Zn(2+) is required as a cofactor.

It localises to the cytoplasm. Its function is as follows. Functions in complex with FlhD as a master transcriptional regulator that regulates transcription of several flagellar and non-flagellar operons by binding to their promoter region. Activates expression of class 2 flagellar genes, including fliA, which is a flagellum-specific sigma factor that turns on the class 3 genes. Also regulates genes whose products function in a variety of physiological pathways. In Escherichia coli O6:H1 (strain CFT073 / ATCC 700928 / UPEC), this protein is Flagellar transcriptional regulator FlhC.